The sequence spans 237 residues: MSQQYEKKVERTEVVYGGDRRVEGSASASAEKTTNYTHTEIRAPMVNPLPPIISTGAAGLAQEIVGEGFTASATRISGAAATTQVLESQASREQAFKDQEKYSREQAAIARAHDKDLEKKTEEYRKTAEAEAEKIRKELEKQHARDVEFRKDLVESAIDRQKREVDLEAKYAKKELEHERELAMNALEQSKMATNVQVQMDTAAGTTVSGGTTVSEHTEVHDGKEKKSLGEKIKSLF.

The segment at 96-125 (FKDQEKYSREQAAIARAHDKDLEKKTEEYR) is disordered. Over residues 111 to 125 (RAHDKDLEKKTEEYR) the composition is skewed to basic and acidic residues. Residues 115-193 (KDLEKKTEEY…MNALEQSKMA (79 aa)) adopt a coiled-coil conformation. 2 CAHS motif regions span residues 124–142 (YRKT…LEKQ) and 161–179 (QKRE…LEHE). Low complexity predominate over residues 204 to 215 (AGTTVSGGTTVS). Residues 204–237 (AGTTVSGGTTVSEHTEVHDGKEKKSLGEKIKSLF) form a disordered region. Positions 216–237 (EHTEVHDGKEKKSLGEKIKSLF) are enriched in basic and acidic residues.

Belongs to the Cytosolic-abundant heat soluble protein (CAHS) family.

It is found in the cytoplasm. Its function is as follows. CAHS proteins are cytosolic heat soluble proteins that seem to contribute to the anhydrobiosis in tardigrades, but their specific mechanisms are yet to be identified. It is possible that protection during anhydrobiosis might occur via the stabilization of vitrifying small molecules such as sugars, but not via the direct glass transition of CAHS proteins themselves. This Hypsibius exemplaris (Freshwater tardigrade) protein is Cytosolic-abundant heat soluble protein 86272.